The following is a 390-amino-acid chain: 3-ketoacyl-CoA thiolase (390 aa).

Cysteine 95 serves as the catalytic Acyl-thioester intermediate. Catalysis depends on proton acceptor residues histidine 346 and cysteine 376.

The protein belongs to the thiolase-like superfamily. Thiolase family. As to quaternary structure, heterotetramer of two alpha chains (FadB) and two beta chains (FadA).

It is found in the cytoplasm. It carries out the reaction an acyl-CoA + acetyl-CoA = a 3-oxoacyl-CoA + CoA. The protein operates within lipid metabolism; fatty acid beta-oxidation. Functionally, catalyzes the final step of fatty acid oxidation in which acetyl-CoA is released and the CoA ester of a fatty acid two carbons shorter is formed. The chain is 3-ketoacyl-CoA thiolase from Acinetobacter baumannii (strain AB307-0294).